Here is a 970-residue protein sequence, read N- to C-terminus: Longitudinals lacking protein, isoforms F/I/K/T (970 aa).

A BTB domain is found at 32–97 (VDCTLAAEGK…MYRGEVNISQ (66 aa)). 4 disordered regions span residues 115–200 (LSDN…SSVL), 228–340 (SSGP…ASAS), 447–468 (DAQQ…EGAQ), and 790–843 (QTVH…LQDD). Low complexity-rich tracts occupy residues 162 to 175 (SGDV…SSSP), 228 to 251 (SSGP…LTST), 263 to 293 (TSST…QTTS), and 329 to 340 (NSATGPNPASAS). Polar residues-rich tracts occupy residues 447-456 (DAQQRDPQAS) and 808-818 (QLQTHHIQTVV). A compositionally biased stretch (low complexity) spans 819-828 (QSSSGQQQHD). The C2H2-type 1; degenerate zinc finger occupies 903–925 (YVCRHCGKKYRWKSTLRRHENVE). Residues 933–955 (HPCPYCSYKAKQRGNLGVHVRKH) form a C2H2-type 2 zinc finger.

By stage 11, isoform F is expressed throughout the mesoderm whereas isoform T, and at low levels isoform I, is expressed throughout the ectoderm. Isoform K is expressed in both mesoderm and ectoderm. Expression becomes restricted during later stages; starting from stage 14 to 15, isoform F is expressed in the gut. Isoform I is expressed in the CNS. Isoform I and isoform F show expression in the epithelium starting at stage 14, though for isoform I the CNS expression remains predominant. Expression is also seen in specific types of cells in the embryo; isoform K is expressed in the ventral furrow at stage 5 and in a dynamic pattern in the ventral neurogenic region starting at stage 7. Isoform T is expressed around the tracheal pits at stage 11. Isoform F shows transient enrichment in a dorsal cell layer in the CNS at stages 13 and 14.

The protein localises to the nucleus. Its function is as follows. Putative transcription factor required for axon growth and guidance in the central and peripheral nervous systems. Repels CNS axons away from the midline by promoting the expression of the midline repellent sli and its receptor robo. The protein is Longitudinals lacking protein, isoforms F/I/K/T of Drosophila melanogaster (Fruit fly).